We begin with the raw amino-acid sequence, 275 residues long: LIM/homeobox protein Awh (275 aa).

LIM zinc-binding domains lie at 6–67 and 68–129; these read RSCA…NFGA and KCSK…TVEG. Position 126 is a phosphothreonine (threonine 126). A DNA-binding region (homeobox) is located at residues 148–207; it reads TKRVRTTFTEEQLQVLQANFQIDSNPDGQDLERIASVTGLSKRVTQVWFQNSRARQKKHI. The interval 253-275 is disordered; sequence PTHESSMDELSQDSSVHCMPSEV.

As to expression, first detected in neuroblasts in stage 9 embryos. Expressed in all 10 abdominal segments and in the labial segment during early embryogenesis. Expressed in the stage 14 developing epithelium. By embryonic stage 16, expression is refined to the abdominal histoblasts and salivary gland imaginal ring cells. Expressed in both larval and imaginal cells between the salivary gland and the salivary gland imaginal ring, in late third instar larvae. Also expressed in specific areas of the larval wing, leg and eye-antennal disks.

It localises to the nucleus. Functionally, probable transcription factor. Required for the establishment of a subset of imaginal tissues: the abdominal histoblasts and the salivary gland imaginal rings. In Drosophila melanogaster (Fruit fly), this protein is LIM/homeobox protein Awh.